A 704-amino-acid chain; its full sequence is Polyribonucleotide nucleotidyltransferase (704 aa).

Asp485 and Asp491 together coordinate Mg(2+). One can recognise a KH domain in the interval Pro552–Ile611. The region spanning Gly621–Lys689 is the S1 motif domain.

It belongs to the polyribonucleotide nucleotidyltransferase family. Mg(2+) is required as a cofactor.

It is found in the cytoplasm. It carries out the reaction RNA(n+1) + phosphate = RNA(n) + a ribonucleoside 5'-diphosphate. Involved in mRNA degradation. Catalyzes the phosphorolysis of single-stranded polyribonucleotides processively in the 3'- to 5'-direction. The chain is Polyribonucleotide nucleotidyltransferase from Halalkalibacterium halodurans (strain ATCC BAA-125 / DSM 18197 / FERM 7344 / JCM 9153 / C-125) (Bacillus halodurans).